The sequence spans 702 residues: Phosphoglycerol transferase I (702 aa).

A run of 3 helical transmembrane segments spans residues 2-22, 71-91, and 103-123; these read HWIL…SPRL, FSGY…PLML, and GGAV…VSPV.

Belongs to the OpgB family.

The protein localises to the cell inner membrane. It carries out the reaction a phosphatidylglycerol + a membrane-derived-oligosaccharide D-glucose = a 1,2-diacyl-sn-glycerol + a membrane-derived-oligosaccharide 6-(glycerophospho)-D-glucose.. It functions in the pathway glycan metabolism; osmoregulated periplasmic glucan (OPG) biosynthesis. In terms of biological role, transfers a phosphoglycerol residue from phosphatidylglycerol to the membrane-bound nascent glucan backbones. This Xanthomonas campestris pv. campestris (strain B100) protein is Phosphoglycerol transferase I.